Reading from the N-terminus, the 244-residue chain is 7-cyano-7-deazaguanine synthase (244 aa).

Residue 14-24 (FSGGQDSATCV) coordinates ATP. Zn(2+) contacts are provided by C202, C217, C220, and C223.

This sequence belongs to the QueC family. The cofactor is Zn(2+).

It carries out the reaction 7-carboxy-7-deazaguanine + NH4(+) + ATP = 7-cyano-7-deazaguanine + ADP + phosphate + H2O + H(+). It participates in purine metabolism; 7-cyano-7-deazaguanine biosynthesis. Catalyzes the ATP-dependent conversion of 7-carboxy-7-deazaguanine (CDG) to 7-cyano-7-deazaguanine (preQ(0)). The protein is 7-cyano-7-deazaguanine synthase of Burkholderia vietnamiensis (strain G4 / LMG 22486) (Burkholderia cepacia (strain R1808)).